Here is a 260-residue protein sequence, read N- to C-terminus: tRNA pseudouridine synthase A (260 aa).

The active-site Nucleophile is the Asp52. Residue Tyr111 participates in substrate binding.

It belongs to the tRNA pseudouridine synthase TruA family. In terms of assembly, homodimer.

The catalysed reaction is uridine(38/39/40) in tRNA = pseudouridine(38/39/40) in tRNA. Formation of pseudouridine at positions 38, 39 and 40 in the anticodon stem and loop of transfer RNAs. This Roseobacter denitrificans (strain ATCC 33942 / OCh 114) (Erythrobacter sp. (strain OCh 114)) protein is tRNA pseudouridine synthase A.